The following is a 258-amino-acid chain: Glucosamine-6-phosphate deaminase (258 aa).

Asp65 (proton acceptor; for enolization step) is an active-site residue. Asp134 (for ring-opening step) is an active-site residue. His136 acts as the Proton acceptor; for ring-opening step in catalysis. The active-site For ring-opening step is Glu141.

Belongs to the glucosamine/galactosamine-6-phosphate isomerase family. NagB subfamily.

It catalyses the reaction alpha-D-glucosamine 6-phosphate + H2O = beta-D-fructose 6-phosphate + NH4(+). Its pathway is amino-sugar metabolism; N-acetylneuraminate degradation; D-fructose 6-phosphate from N-acetylneuraminate: step 5/5. Its function is as follows. Catalyzes the reversible isomerization-deamination of glucosamine 6-phosphate (GlcN6P) to form fructose 6-phosphate (Fru6P) and ammonium ion. The sequence is that of Glucosamine-6-phosphate deaminase from Corynebacterium kroppenstedtii (strain DSM 44385 / JCM 11950 / CIP 105744 / CCUG 35717).